The chain runs to 327 residues: Prenyl transferase janC (327 aa).

A helical membrane pass occupies residues 3–23 (FPGAGPILGAIAVSSCLYFLF). Residues lysine 63 and histidine 96 each contribute to the isopentenyl diphosphate site. 2 residues coordinate Mg(2+): aspartate 103 and aspartate 107. Dimethylallyl diphosphate is bound by residues arginine 112 and lysine 196. A glycan (N-linked (GlcNAc...) asparagine) is linked at asparagine 211.

It belongs to the FPP/GGPP synthase family.

The protein resides in the membrane. The protein operates within secondary metabolite biosynthesis. Prenyl transferase; part of the gene cluster that mediates the biosynthesis of the indole diterpenes janthitremanes such as shearinine K or shearinine A. The geranylgeranyl diphosphate (GGPP) synthase janG catalyzes the first step in janthitremane biosynthesis via conversion of farnesyl pyrophosphate and isopentyl pyrophosphate into geranylgeranyl pyrophosphate (GGPP). Condensation of indole-3-glycerol phosphate with GGPP by the prenyl transferase janC then forms 3-geranylgeranylindole (3-GGI). Epoxidation by the FAD-dependent monooxygenase janM leads to a epoxidized-GGI that is substrate of the terpene cyclase janB for cyclization to yield paspaline. Paspaline is subsequently converted to 13-desoxypaspaline by the cytochrome P450 monooxygenase janP, via beta-PC-M6 in a series of alpha-face oxidations. The cytochrome P450 monooxygenase janQ is proposed to carry out sequential beta-face oxidation steps at C-7 and C-13 of 13-desoxypaspaline to form paspalicine and paspalinine respectively. The indole diterpene prenyltransferase janD may then convert paspalinine into shearinine K which is substrate of janO and/or additional enzymes for oxidation and cyclization to generate shearinine A. The protein is Prenyl transferase janC of Penicillium janthinellum (Penicillium vitale).